Reading from the N-terminus, the 268-residue chain is Zygote formation protein zyg1 (268 aa).

In terms of biological role, plays an essential role in zygote formation by inducing sexual cell fusion. Overexpressing cells eventually formed many loose mounds, in which giant multinucleate cells were surrounded by normal-sized cells. This Dictyostelium mucoroides (Slime mold) protein is Zygote formation protein zyg1 (zyg1).